Reading from the N-terminus, the 70-residue chain is Protein FlmC homolog (70 aa).

Positions 1–21 (MSSPHQDSLLPRFAQGEEGHE) are disordered.

The protein is Protein FlmC homolog of Escherichia coli.